The following is a 344-amino-acid chain: Dihydroorotase (344 aa).

The Zn(2+) site is built by His-13 and His-15. Residues 15-17 (HVR) and Asn-41 contribute to the substrate site. Residues Lys-99, His-136, and His-174 each contribute to the Zn(2+) site. Residue Lys-99 is modified to N6-carboxylysine. His-136 lines the substrate pocket. A substrate-binding site is contributed by Leu-219. A Zn(2+)-binding site is contributed by Asp-247. Asp-247 is an active-site residue. The substrate site is built by His-251 and Ala-263.

It belongs to the metallo-dependent hydrolases superfamily. DHOase family. Class II DHOase subfamily. Homodimer. Requires Zn(2+) as cofactor.

It catalyses the reaction (S)-dihydroorotate + H2O = N-carbamoyl-L-aspartate + H(+). The protein operates within pyrimidine metabolism; UMP biosynthesis via de novo pathway; (S)-dihydroorotate from bicarbonate: step 3/3. Functionally, catalyzes the reversible cyclization of carbamoyl aspartate to dihydroorotate. This chain is Dihydroorotase, found in Aromatoleum aromaticum (strain DSM 19018 / LMG 30748 / EbN1) (Azoarcus sp. (strain EbN1)).